The primary structure comprises 453 residues: 13-hydroxylupanine O-tigloyltransferase (453 aa).

Active-site proton acceptor residues include histidine 166 and aspartate 385.

The protein belongs to the plant acyltransferase family. In terms of assembly, monomer. Expressed in roots and hypocotyls. Detected in seeds, leaves and cotyledons, but not in young developing leaves.

The catalysed reaction is 13-hydroxylupanine + (2E)-2-methylbut-2-enoyl-CoA = 13-(2-methylcrotonoyloxy)lupanine + CoA. Its activity is regulated as follows. Inhibited by N-ethylmaleimide, p-chloromercuribenzoic acid and diethylpyrocarbonate (DEPC). Acyl-CoA-dependent acyltransferase involved in the synthesis of lupanine alkaloids. Can use both (-)-13alpha-hydroxymultiflorine and (+)-13alpha-hydroxylupanine as substrates. Lower activity with (-)-3beta, 13alpha-dihydroxylupanine, but no activity with (+)-epilupinine and (-)-lupinine as substrates. Tigloyl-CoA, benzoyl-CoA and, more slowly, acetyl-CoA, propionyl-CoA and 2-butenoyl-CoA can act as acyl donors. The polypeptide is 13-hydroxylupanine O-tigloyltransferase (HMT/HLT) (Lupinus albus (White lupine)).